The primary structure comprises 150 residues: Arginine repressor (150 aa).

It belongs to the ArgR family.

The protein localises to the cytoplasm. The protein operates within amino-acid biosynthesis; L-arginine biosynthesis [regulation]. In terms of biological role, regulates arginine biosynthesis genes. In Symbiobacterium thermophilum (strain DSM 24528 / JCM 14929 / IAM 14863 / T), this protein is Arginine repressor.